We begin with the raw amino-acid sequence, 1202 residues long: DNA-directed RNA polymerase subunit beta (1202 aa).

This sequence belongs to the RNA polymerase beta chain family. As to quaternary structure, the RNAP catalytic core consists of 2 alpha, 1 beta, 1 beta' and 1 omega subunit. When a sigma factor is associated with the core the holoenzyme is formed, which can initiate transcription.

It catalyses the reaction RNA(n) + a ribonucleoside 5'-triphosphate = RNA(n+1) + diphosphate. DNA-dependent RNA polymerase catalyzes the transcription of DNA into RNA using the four ribonucleoside triphosphates as substrates. The chain is DNA-directed RNA polymerase subunit beta from Leuconostoc mesenteroides subsp. mesenteroides (strain ATCC 8293 / DSM 20343 / BCRC 11652 / CCM 1803 / JCM 6124 / NCDO 523 / NBRC 100496 / NCIMB 8023 / NCTC 12954 / NRRL B-1118 / 37Y).